A 315-amino-acid polypeptide reads, in one-letter code: Probable cytochrome c oxidase subunit 2 (315 aa).

The 48-residue stretch at 6–53 (RHLSKPAYREEFKGDTSPRTAAYISNRADASLGSTYKLPLEAKFWKMS) folds into the RPE1 insert domain. Transmembrane regions (helical) follow at residues 41-61 (YKLP…CFLI), 96-116 (LLYI…FVCI), and 133-153 (VLIE…IAVP). Residues His235, Cys270, Cys274, and His278 each coordinate Cu cation.

It belongs to the cytochrome c oxidase subunit 2 family. Cu cation serves as cofactor. The cofactor is heme.

Its subcellular location is the cell membrane. It carries out the reaction 4 Fe(II)-[cytochrome c] + O2 + 8 H(+)(in) = 4 Fe(III)-[cytochrome c] + 2 H2O + 4 H(+)(out). Subunits I and II form the functional core of the enzyme complex. Electrons originating in cytochrome c are transferred via heme a and Cu(A) to the binuclear center formed by heme a3 and Cu(B). The polypeptide is Probable cytochrome c oxidase subunit 2 (ctaC) (Rickettsia felis (strain ATCC VR-1525 / URRWXCal2) (Rickettsia azadi)).